Consider the following 78-residue polypeptide: Putative gastrointestinal growth factor xP1 (78 aa).

Residues 1-23 form the signal peptide; the sequence is MNYKVFCLVAIALIVGSIGSANG. Residues 30-73 enclose the P-type domain; the sequence is EQCSVERLARVNCGYSGITPQECTKQGCCFDSTIQDAPWCFYPR. Disulfide bonds link Cys32-Cys58, Cys42-Cys57, and Cys52-Cys69.

As to expression, stomach mucosa.

It is found in the secreted. May act as a growth factor. The sequence is that of Putative gastrointestinal growth factor xP1 (p1) from Xenopus laevis (African clawed frog).